Here is a 77-residue protein sequence, read N- to C-terminus: Acyl carrier protein (77 aa).

One can recognise a Carrier domain in the interval 2–77 (SDVAERVKKI…DAIDFITANS (76 aa)). Ser-37 carries the O-(pantetheine 4'-phosphoryl)serine modification.

This sequence belongs to the acyl carrier protein (ACP) family. Post-translationally, 4'-phosphopantetheine is transferred from CoA to a specific serine of apo-ACP by AcpS. This modification is essential for activity because fatty acids are bound in thioester linkage to the sulfhydryl of the prosthetic group.

It localises to the cytoplasm. The protein operates within lipid metabolism; fatty acid biosynthesis. Carrier of the growing fatty acid chain in fatty acid biosynthesis. The chain is Acyl carrier protein from Paramagnetospirillum magneticum (strain ATCC 700264 / AMB-1) (Magnetospirillum magneticum).